A 302-amino-acid polypeptide reads, in one-letter code: Putative gluconeogenesis factor (302 aa).

Belongs to the gluconeogenesis factor family.

It is found in the cytoplasm. Its function is as follows. Required for morphogenesis under gluconeogenic growth conditions. The protein is Putative gluconeogenesis factor (ybhK) of Salmonella typhi.